Reading from the N-terminus, the 328-residue chain is Nuclear transcription factor Y subunit A-8 (328 aa).

Residues 54–86 (KNISFQDQDSSSTLSSAQSSNDVTSSGDDNPSR) form a disordered region. Residues 57–75 (SFQDQDSSSTLSSAQSSND) are compositionally biased toward low complexity. A compositionally biased stretch (polar residues) spans 76 to 86 (VTSSGDDNPSR). The Subunit association domain (SAD) signature appears at 175-198 (FVNAKQFHAIMRRRQQRAKLEAQN). Residues 205–230 (KPYLHESRHVHALKRPRGSGGRFLNT) constitute a DNA-binding region (NFYA/HAP2-type).

This sequence belongs to the NFYA/HAP2 subunit family. In terms of assembly, heterotrimeric transcription factor composed of three components, NF-YA, NF-YB and NF-YC. NF-YB and NF-YC must interact and dimerize for NF-YA association and DNA binding. Expressed in the whole plant, except roots.

The protein resides in the nucleus. Its function is as follows. Stimulates the transcription of various genes by recognizing and binding to a CCAAT motif in promoters. The sequence is that of Nuclear transcription factor Y subunit A-8 (NFYA8) from Arabidopsis thaliana (Mouse-ear cress).